The following is a 389-amino-acid chain: Phospho-N-acetylmuramoyl-pentapeptide-transferase (389 aa).

Transmembrane regions (helical) follow at residues 25–45 (RAVMASLTALVIGLGFGPFVI), 74–94 (MGGVLVLIGIAVSTLLWADWG), 97–117 (FIWIVLLVTLGYGAIGWVDDY), 134–154 (FFWQTVIGLFAAAYLAFSVSE), 190–210 (ISYPLGVFGFIILTYLVIVGS), 222–242 (GLVIMPVVLVGSALGVFAYVM), 259–279 (AGELLIFCSAMAGAGLAFLWF), 286–306 (VFMGDVGALALGGALGTIAVI), 311–331 (IVLFIMGGIFVAETVSVMLQV), and 366–386 (QVVVRFWVITMMLVLIGLSTL).

Belongs to the glycosyltransferase 4 family. MraY subfamily. The cofactor is Mg(2+).

The protein resides in the cell inner membrane. The enzyme catalyses UDP-N-acetyl-alpha-D-muramoyl-L-alanyl-gamma-D-glutamyl-meso-2,6-diaminopimeloyl-D-alanyl-D-alanine + di-trans,octa-cis-undecaprenyl phosphate = di-trans,octa-cis-undecaprenyl diphospho-N-acetyl-alpha-D-muramoyl-L-alanyl-D-glutamyl-meso-2,6-diaminopimeloyl-D-alanyl-D-alanine + UMP. It functions in the pathway cell wall biogenesis; peptidoglycan biosynthesis. Functionally, catalyzes the initial step of the lipid cycle reactions in the biosynthesis of the cell wall peptidoglycan: transfers peptidoglycan precursor phospho-MurNAc-pentapeptide from UDP-MurNAc-pentapeptide onto the lipid carrier undecaprenyl phosphate, yielding undecaprenyl-pyrophosphoryl-MurNAc-pentapeptide, known as lipid I. The chain is Phospho-N-acetylmuramoyl-pentapeptide-transferase from Ralstonia pickettii (strain 12J).